We begin with the raw amino-acid sequence, 403 residues long: Ribosomal RNA large subunit methyltransferase I (403 aa).

A PUA domain is found at 9–88 (YPRLVLSKGR…ESIDIAFFTR (80 aa)).

The protein belongs to the methyltransferase superfamily. RlmI family.

It localises to the cytoplasm. It catalyses the reaction cytidine(1962) in 23S rRNA + S-adenosyl-L-methionine = 5-methylcytidine(1962) in 23S rRNA + S-adenosyl-L-homocysteine + H(+). Functionally, specifically methylates the cytosine at position 1962 (m5C1962) of 23S rRNA. The chain is Ribosomal RNA large subunit methyltransferase I from Salmonella choleraesuis (strain SC-B67).